A 566-amino-acid chain; its full sequence is Glucose-6-phosphate isomerase (566 aa).

The active-site Proton donor is the E374. Residues H405 and K529 contribute to the active site.

This sequence belongs to the GPI family.

The protein resides in the cytoplasm. It carries out the reaction alpha-D-glucose 6-phosphate = beta-D-fructose 6-phosphate. It functions in the pathway carbohydrate biosynthesis; gluconeogenesis. It participates in carbohydrate degradation; glycolysis; D-glyceraldehyde 3-phosphate and glycerone phosphate from D-glucose: step 2/4. Its function is as follows. Catalyzes the reversible isomerization of glucose-6-phosphate to fructose-6-phosphate. The protein is Glucose-6-phosphate isomerase of Bifidobacterium longum (strain NCC 2705).